Here is a 302-residue protein sequence, read N- to C-terminus: Recombination-associated protein RdgC (302 aa).

Belongs to the RdgC family.

It localises to the cytoplasm. Its subcellular location is the nucleoid. In terms of biological role, may be involved in recombination. This is Recombination-associated protein RdgC from Actinobacillus pleuropneumoniae serotype 7 (strain AP76).